The primary structure comprises 277 residues: Probable endonuclease 4 (277 aa).

Positions 67, 107, 141, 173, 176, 210, 223, 225, and 255 each coordinate Zn(2+).

It belongs to the AP endonuclease 2 family. It depends on Zn(2+) as a cofactor.

It carries out the reaction Endonucleolytic cleavage to 5'-phosphooligonucleotide end-products.. Endonuclease IV plays a role in DNA repair. It cleaves phosphodiester bonds at apurinic or apyrimidinic (AP) sites, generating a 3'-hydroxyl group and a 5'-terminal sugar phosphate. The protein is Probable endonuclease 4 of Haloarcula marismortui (strain ATCC 43049 / DSM 3752 / JCM 8966 / VKM B-1809) (Halobacterium marismortui).